Reading from the N-terminus, the 102-residue chain is Small ribosomal subunit protein uS10 (102 aa).

The protein belongs to the universal ribosomal protein uS10 family. In terms of assembly, part of the 30S ribosomal subunit.

Involved in the binding of tRNA to the ribosomes. In Streptococcus thermophilus (strain ATCC BAA-250 / LMG 18311), this protein is Small ribosomal subunit protein uS10.